The following is a 179-amino-acid chain: IMPACT family member in pol 5'region (179 aa).

Belongs to the IMPACT family.

The protein is IMPACT family member in pol 5'region of Thermus thermophilus.